Here is a 640-residue protein sequence, read N- to C-terminus: Chaperone protein DnaK (640 aa).

Position 198 is a phosphothreonine; by autocatalysis (Thr198). The tract at residues Lys600–Lys640 is disordered. Acidic residues predominate over residues Val628 to Lys640.

Belongs to the heat shock protein 70 family.

In terms of biological role, acts as a chaperone. The polypeptide is Chaperone protein DnaK (Geobacter sp. (strain M21)).